The following is a 266-amino-acid chain: Ras-like protein family member 12 (266 aa).

Residues 27 to 34 (GRRGAGKS), 74 to 78 (DTADL), and 134 to 137 (NKLD) contribute to the GTP site.

The protein belongs to the small GTPase superfamily. Ras family.

It carries out the reaction GTP + H2O = GDP + phosphate + H(+). The protein is Ras-like protein family member 12 (Rasl12) of Mus musculus (Mouse).